Consider the following 518-residue polypeptide: Chromosomal replication initiator protein DnaA (518 aa).

The segment at 1–72 is domain I, interacts with DnaA modulators; it reads MTLAEFWPLC…VREELAAGRS (72 aa). Residues 72–180 are domain II; it reads SAFVFKPGEG…DAEEARYEQT (109 aa). Positions 145 to 178 are disordered; that stretch reads EPRQAAGSASRPESAAVAKARTDAQRDAEEARYE. Residues 164 to 177 are compositionally biased toward basic and acidic residues; sequence ARTDAQRDAEEARY. The interval 181-397 is domain III, AAA+ region; that stretch reads NLSPDYTFDT…GAFNRVGASS (217 aa). ATP contacts are provided by glycine 225, glycine 227, lysine 228, and threonine 229. The domain IV, binds dsDNA stretch occupies residues 398–518; that stretch reads RFMNRPVIDI…YEKLLILIQN (121 aa).

This sequence belongs to the DnaA family. As to quaternary structure, oligomerizes as a right-handed, spiral filament on DNA at oriC.

Its subcellular location is the cytoplasm. Functionally, plays an essential role in the initiation and regulation of chromosomal replication. ATP-DnaA binds to the origin of replication (oriC) to initiate formation of the DNA replication initiation complex once per cell cycle. Binds the DnaA box (a 9 base pair repeat at the origin) and separates the double-stranded (ds)DNA. Forms a right-handed helical filament on oriC DNA; dsDNA binds to the exterior of the filament while single-stranded (ss)DNA is stabiized in the filament's interior. The ATP-DnaA-oriC complex binds and stabilizes one strand of the AT-rich DNA unwinding element (DUE), permitting loading of DNA polymerase. After initiation quickly degrades to an ADP-DnaA complex that is not apt for DNA replication. Binds acidic phospholipids. This chain is Chromosomal replication initiator protein DnaA, found in Neisseria meningitidis serogroup A / serotype 4A (strain DSM 15465 / Z2491).